Consider the following 198-residue polypeptide: Putative mycofactocin biosynthesis transcriptional regulator MftR (198 aa).

Residues 12–72 enclose the HTH tetR-type domain; it reads STTPHHISDV…GDFSTHLAQL (61 aa). Positions 35–54 form a DNA-binding region, H-T-H motif; the sequence is SVDDIARAAGIARRTLFRYY.

Functionally, may regulate a gene cluster involved in mycofactocin expression. Mycofactocin is a conserved polypeptide that might serve as an electron carrier. This Mycobacterium tuberculosis (strain ATCC 25618 / H37Rv) protein is Putative mycofactocin biosynthesis transcriptional regulator MftR (mftR).